The following is a 30-amino-acid chain: Hementerin (30 aa).

The cofactor is Ca(2+).

It is found in the secreted. Its activity is regulated as follows. Fibrino(geno)lytic activity inhibited by EDTA but not by PMSF, E-64, 6-AHA and aprotinin. Its function is as follows. Cleaves fibrinogen Aalpha (FGA), gamma (FGG) and Bbeta (FGB) chains. Degrades cross-linked fibrin. Has no amidolytic, plasminogenolytic or caseinolytic activity. Inhibits platelet aggregation induced by collagen (IC(50)=7.5ug/ml) and various other agonists, presumably via activation of a nitridergic pathway. Inhibition is accompanied by reduced ATP release from and surface expression of SELP and CD63 on platelets as well as increased intracellular levels of Ca(2+), cGMP and nitric oxide synthase activity. This Haementeria depressa (Leech) protein is Hementerin.